The primary structure comprises 287 residues: ATP synthase gamma chain (287 aa).

This sequence belongs to the ATPase gamma chain family. In terms of assembly, F-type ATPases have 2 components, CF(1) - the catalytic core - and CF(0) - the membrane proton channel. CF(1) has five subunits: alpha(3), beta(3), gamma(1), delta(1), epsilon(1). CF(0) has three main subunits: a, b and c.

It localises to the cell inner membrane. Produces ATP from ADP in the presence of a proton gradient across the membrane. The gamma chain is believed to be important in regulating ATPase activity and the flow of protons through the CF(0) complex. In Salmonella paratyphi A (strain ATCC 9150 / SARB42), this protein is ATP synthase gamma chain.